The chain runs to 352 residues: Phenylalanine--tRNA ligase alpha subunit (352 aa).

E258 provides a ligand contact to Mg(2+).

Belongs to the class-II aminoacyl-tRNA synthetase family. Phe-tRNA synthetase alpha subunit type 1 subfamily. Tetramer of two alpha and two beta subunits. Mg(2+) serves as cofactor.

The protein localises to the cytoplasm. The catalysed reaction is tRNA(Phe) + L-phenylalanine + ATP = L-phenylalanyl-tRNA(Phe) + AMP + diphosphate + H(+). The sequence is that of Phenylalanine--tRNA ligase alpha subunit from Staphylococcus haemolyticus (strain JCSC1435).